Consider the following 355-residue polypeptide: UDP-N-acetylglucosamine--N-acetylmuramyl-(pentapeptide) pyrophosphoryl-undecaprenol N-acetylglucosamine transferase (355 aa).

UDP-N-acetyl-alpha-D-glucosamine contacts are provided by residues 14–16, asparagine 126, arginine 162, serine 190, isoleucine 243, 262–267, and glutamine 288; these read SGG and ALTVSE.

The protein belongs to the glycosyltransferase 28 family. MurG subfamily.

It localises to the cell inner membrane. The enzyme catalyses di-trans,octa-cis-undecaprenyl diphospho-N-acetyl-alpha-D-muramoyl-L-alanyl-D-glutamyl-meso-2,6-diaminopimeloyl-D-alanyl-D-alanine + UDP-N-acetyl-alpha-D-glucosamine = di-trans,octa-cis-undecaprenyl diphospho-[N-acetyl-alpha-D-glucosaminyl-(1-&gt;4)]-N-acetyl-alpha-D-muramoyl-L-alanyl-D-glutamyl-meso-2,6-diaminopimeloyl-D-alanyl-D-alanine + UDP + H(+). Its pathway is cell wall biogenesis; peptidoglycan biosynthesis. Functionally, cell wall formation. Catalyzes the transfer of a GlcNAc subunit on undecaprenyl-pyrophosphoryl-MurNAc-pentapeptide (lipid intermediate I) to form undecaprenyl-pyrophosphoryl-MurNAc-(pentapeptide)GlcNAc (lipid intermediate II). This chain is UDP-N-acetylglucosamine--N-acetylmuramyl-(pentapeptide) pyrophosphoryl-undecaprenol N-acetylglucosamine transferase, found in Blochmanniella pennsylvanica (strain BPEN).